The following is a 414-amino-acid chain: Succinylornithine transaminase (414 aa).

An N6-(pyridoxal phosphate)lysine modification is found at K260.

The protein belongs to the class-III pyridoxal-phosphate-dependent aminotransferase family. AstC subfamily. It depends on pyridoxal 5'-phosphate as a cofactor.

The catalysed reaction is N(2)-succinyl-L-ornithine + 2-oxoglutarate = N-succinyl-L-glutamate 5-semialdehyde + L-glutamate. The protein operates within amino-acid degradation; L-arginine degradation via AST pathway; L-glutamate and succinate from L-arginine: step 3/5. In terms of biological role, catalyzes the transamination of N(2)-succinylornithine and alpha-ketoglutarate into N(2)-succinylglutamate semialdehyde and glutamate. Can also act as an acetylornithine aminotransferase. The chain is Succinylornithine transaminase from Yersinia enterocolitica serotype O:8 / biotype 1B (strain NCTC 13174 / 8081).